Reading from the N-terminus, the 916-residue chain is Protein translocase subunit SecA (916 aa).

ATP is bound by residues Gln-87, Gly-105–Thr-109, and Asp-512. The disordered stretch occupies residues Gln-857–Asp-916. Cys-900, Cys-902, Cys-911, and His-912 together coordinate Zn(2+). Basic residues predominate over residues Lys-906–Asp-916.

Belongs to the SecA family. In terms of assembly, monomer and homodimer. Part of the essential Sec protein translocation apparatus which comprises SecA, SecYEG and auxiliary proteins SecDF-YajC and YidC. Zn(2+) serves as cofactor.

The protein resides in the cell inner membrane. Its subcellular location is the cytoplasm. The catalysed reaction is ATP + H2O + cellular proteinSide 1 = ADP + phosphate + cellular proteinSide 2.. Part of the Sec protein translocase complex. Interacts with the SecYEG preprotein conducting channel. Has a central role in coupling the hydrolysis of ATP to the transfer of proteins into and across the cell membrane, serving both as a receptor for the preprotein-SecB complex and as an ATP-driven molecular motor driving the stepwise translocation of polypeptide chains across the membrane. The polypeptide is Protein translocase subunit SecA (Pseudomonas aeruginosa (strain LESB58)).